Here is a 399-residue protein sequence, read N- to C-terminus: Elongation factor Tu (399 aa).

Residues 10 to 209 form the tr-type G domain; the sequence is KPHVNIGTIG…EVDAYIPTPE (200 aa). Positions 19 to 26 are G1; sequence GHVDHGKT. 19–26 is a binding site for GTP; the sequence is GHVDHGKT. A Mg(2+)-binding site is contributed by threonine 26. Residues 60–64 are G2; sequence GITIA. The G3 stretch occupies residues 81-84; that stretch reads DCPG. GTP-binding positions include 81–85 and 136–139; these read DCPGH and NKQD. Residues 136–139 form a G4 region; that stretch reads NKQD. The tract at residues 174–176 is G5; sequence SAL.

Belongs to the TRAFAC class translation factor GTPase superfamily. Classic translation factor GTPase family. EF-Tu/EF-1A subfamily. In terms of assembly, monomer.

The protein localises to the cytoplasm. It catalyses the reaction GTP + H2O = GDP + phosphate + H(+). In terms of biological role, GTP hydrolase that promotes the GTP-dependent binding of aminoacyl-tRNA to the A-site of ribosomes during protein biosynthesis. The sequence is that of Elongation factor Tu from Helicobacter pylori (strain Shi470).